The chain runs to 170 residues: uncharacterized protein (170 aa).

5 helical membrane-spanning segments follow: residues 21–41 (NISL…AAVL), 55–75 (AYTS…TLLL), 86–106 (TGIA…YWLW), 117–137 (ISGV…VSLL), and 143–163 (FSAA…TLLP). Residues 35–161 (IIFAAVLRWT…IMLATLGSTL (127 aa)) enclose the EamA domain.

This sequence belongs to the EamA transporter family.

The protein resides in the cell membrane. This is an uncharacterized protein from Haemophilus influenzae (strain ATCC 51907 / DSM 11121 / KW20 / Rd).